Reading from the N-terminus, the 416-residue chain is Gamma-glutamyl phosphate reductase (416 aa).

This sequence belongs to the gamma-glutamyl phosphate reductase family.

Its subcellular location is the cytoplasm. It carries out the reaction L-glutamate 5-semialdehyde + phosphate + NADP(+) = L-glutamyl 5-phosphate + NADPH + H(+). It participates in amino-acid biosynthesis; L-proline biosynthesis; L-glutamate 5-semialdehyde from L-glutamate: step 2/2. Its function is as follows. Catalyzes the NADPH-dependent reduction of L-glutamate 5-phosphate into L-glutamate 5-semialdehyde and phosphate. The product spontaneously undergoes cyclization to form 1-pyrroline-5-carboxylate. The chain is Gamma-glutamyl phosphate reductase from Salmonella heidelberg (strain SL476).